A 405-amino-acid chain; its full sequence is Peroxisome biogenesis factor 3 (405 aa).

Topologically, residues 1–26 (MENFQFEDLSPNKVSKVYQDLKKFGS) are cytoplasmic. A helical transmembrane segment spans residues 27 to 49 (FLYNHKMGVFLVSFSSGVAYLYH). Residues 50 to 124 (NITQSHKRKQ…EKLKLTDQLK (75 aa)) are Peroxisomal-facing. The helical transmembrane segment at 125–144 (VSIITKLFSVLYIIPMVTIF) threads the bilayer. Residues 145-405 (NRLQINLIGK…NDLDFNKVQF (261 aa)) lie on the Cytoplasmic side of the membrane.

It belongs to the peroxin-3 family.

It is found in the peroxisome membrane. In terms of biological role, involved in peroxisome biosynthesis. The chain is Peroxisome biogenesis factor 3 (pex3) from Dictyostelium discoideum (Social amoeba).